The following is a 476-amino-acid chain: Protein transport protein Sec61 subunit alpha (476 aa).

Residues 2 to 33 (GIKFLEFIKPFCAVLPEIQKPERKIQFREKVL) lie on the Cytoplasmic side of the membrane. Residues 34-53 (WTAITLFIFLVCCQIPLFGI) form a helical membrane-spanning segment. Topologically, residues 54 to 76 (MSSDSADPFYWMRVILASNRGTL) are lumenal. The chain crosses the membrane as a helical span at residues 77 to 96 (MELGISPIVTSGLIMQLLAG). The Cytoplasmic portion of the chain corresponds to 97 to 117 (AKIIEVGDTPKDRALFNGAQK). Residues 118–138 (LFGMIITIGQAIVYVMTGMYG) form a helical membrane-spanning segment. Residues 139 to 144 (DPSEMG) lie on the Lumenal side of the membrane. The chain crosses the membrane as a helical span at residues 145 to 165 (AGICLLIIIQLFVAGLIVLLL). Over 166–172 (DELLQKG) the chain is Cytoplasmic. A helical transmembrane segment spans residues 173 to 193 (YGLGSGISLFIATNICETIVW). Residues 194 to 240 (KAFSPTTVNTGRGTEFEGAIIALFHLLATRTDKVRALREAFYRQNLP) are Lumenal-facing. A helical transmembrane segment spans residues 241–261 (NILNLIATVFVFAVVIYFQGF). Residues 262 to 288 (RVDLPIKSARYRGQYNTYPIKLFYTSN) lie on the Cytoplasmic side of the membrane. A helical membrane pass occupies residues 289-309 (IPIILQSALVSNLYVISQMLS). Residues 310–354 (TRFSGNFLVNLLGTWSDATSGGPARAYPVAGLCYYLSPPESFGSV) are Lumenal-facing. A helical membrane pass occupies residues 355 to 375 (LDDPVHAAIYIVFMLGSCAFF). The Cytoplasmic segment spans residues 376–420 (SKTWIEVSGSSAKDVAKQLKEQQMVMRGHRETSMVHELNRYIPTA). A helical membrane pass occupies residues 421-441 (AAFGGLCIGGLSVMADFLGAI). Residues 442–445 (GSGT) are Lumenal-facing. Residues 446–462 (GILLAVTIIYQYFEIFV) form a helical membrane-spanning segment. Residues 463-476 (KEQSEMGSMGALLF) are Cytoplasmic-facing.

The protein belongs to the SecY/SEC61-alpha family. The SEC61 channel-forming translocon complex consists of channel-forming core components SEC61A1, SEC61B and SEC61G and different auxiliary components such as SEC62 and SEC63. The SEC61 channel associates with the multi-pass translocon (MPT) complex.

The protein resides in the endoplasmic reticulum membrane. Component of SEC61 channel-forming translocon complex that mediates transport of signal peptide-containing precursor polypeptides across the endoplasmic reticulum (ER). Forms a ribosome receptor and a gated pore in the ER membrane, both functions required for cotranslational translocation of nascent polypeptides. May cooperate with auxiliary protein SEC62, SEC63 and HSPA5/BiP to enable post-translational transport of small presecretory proteins. The SEC61 channel is also involved in ER membrane insertion of transmembrane proteins: it mediates membrane insertion of the first few transmembrane segments of proteins, while insertion of subsequent transmembrane regions of multi-pass membrane proteins is mediated by the multi-pass translocon (MPT) complex. This chain is Protein transport protein Sec61 subunit alpha (sec61a), found in Notothenia angustata (Rockcod).